Reading from the N-terminus, the 746-residue chain is Stromal interaction molecule 2 (746 aa).

The N-terminal stretch at 1 to 14 (MLLFGLLVAGVADG) is a signal peptide. At 15–218 (CDLVPRHLRG…RPPHNWMKDF (204 aa)) the chain is on the extracellular side. S28 carries the post-translational modification Phosphoserine. One can recognise an EF-hand domain in the interval 67–102 (FSLEALQTIHKQMDDDKDGGIEVDESDEFIREDMKY). Residues D80, D82, D84, and E91 each contribute to the Ca(2+) site. N135 is a glycosylation site (N-linked (GlcNAc...) asparagine). The SAM domain maps to 136–204 (WTLEDTLQWL…QLKALDVVLF (69 aa)). The chain crosses the membrane as a helical span at residues 219-235 (ILTISIVIGVGGCWFAY). The Cytoplasmic segment spans residues 236–746 (TQNKTSKEHV…IKSLFKKKSK (511 aa)). A coiled-coil region spans residues 247–394 (KMMKDLESLQ…EKIKKKRSTV (148 aa)). Disordered regions lie at residues 490 to 562 (PIVP…PDIL) and 592 to 651 (DTAS…RGSP). S523 bears the Phosphoserine mark. Over residues 527 to 539 (QRAQLPAHAPLAA) the composition is skewed to low complexity. The segment covering 540 to 549 (HPRHPHHPQH) has biased composition (basic residues). A phosphoserine mark is found at S609 and S621. Over residues 625–637 (ISRDELSLEDSSR) the composition is skewed to basic and acidic residues. Residues S640, S650, S661, S665, S680, and S697 each carry the phosphoserine modification. A disordered region spans residues 684–746 (LSSGIPVPHP…IKSLFKKKSK (63 aa)). A compositionally biased stretch (basic and acidic residues) spans 723 to 732 (DLCHNGEKSK). Positions 733-746 (KPSKIKSLFKKKSK) are enriched in basic residues.

In terms of assembly, oligomer with STIM1. Interacts with ORAI1. Post-translationally, glycosylated. In terms of processing, phosphorylated predominantly on Ser residues.

The protein resides in the endoplasmic reticulum membrane. Its function is as follows. Plays a role in mediating store-operated Ca(2+) entry (SOCE), a Ca(2+) influx following depletion of intracellular Ca(2+) stores. Functions as a highly sensitive Ca(2+) sensor in the endoplasmic reticulum which activates both store-operated and store-independent Ca(2+)-influx. Regulates basal cytosolic and endoplasmic reticulum Ca(2+) concentrations. Upon mild variations of the endoplasmic reticulum Ca(2+) concentration, translocates from the endoplasmic reticulum to the plasma membrane where it probably activates the Ca(2+) release-activated Ca(2+) (CRAC) channels ORAI1, ORAI2 and ORAI3. May inhibit STIM1-mediated Ca(2+) influx. The protein is Stromal interaction molecule 2 (Stim2) of Mus musculus (Mouse).